The primary structure comprises 100 residues: Movement protein TGBp3 (100 aa).

Residues 1 to 41 lie on the Lumenal side of the membrane; that stretch reads MQTAPREYSTSGPTAVLAPTTNTQHYAPYSLYRFLSSHKLD. Residues 42-59 form a helical membrane-spanning segment; the sequence is LLLGIALLVFLYVITAAP. Over 60–100 the chain is Cytoplasmic; that stretch reads KEVCQVVITGESVVIRNCQQPDRILANLNLSPWNGVKFPLL.

The protein belongs to the Tymovirales TGBp3 protein family.

It is found in the host endoplasmic reticulum membrane. Functionally, plays a role in viral cell-to-cell propagation, by facilitating genome transport to neighboring plant cells through plasmosdesmata. May induce the formation of granular vesicles derived from the Endoplasmic reticulum, which align on actin filaments. In Narcissus mosaic virus (NMV), this protein is Movement protein TGBp3.